A 206-amino-acid chain; its full sequence is Uridine kinase (206 aa).

11-18 serves as a coordination point for ATP; sequence GGTGSGKS.

The protein belongs to the uridine kinase family.

It is found in the cytoplasm. The catalysed reaction is uridine + ATP = UMP + ADP + H(+). The enzyme catalyses cytidine + ATP = CMP + ADP + H(+). It functions in the pathway pyrimidine metabolism; CTP biosynthesis via salvage pathway; CTP from cytidine: step 1/3. The protein operates within pyrimidine metabolism; UMP biosynthesis via salvage pathway; UMP from uridine: step 1/1. The polypeptide is Uridine kinase (Clostridium botulinum (strain Kyoto / Type A2)).